Here is a 355-residue protein sequence, read N- to C-terminus: tRNA-specific 2-thiouridylase MnmA 1 (355 aa).

6-13 (LLSGGVDS) is a binding site for ATP. The interval 92 to 94 (NPD) is interaction with target base in tRNA. The active-site Nucleophile is the C97. Cysteines 97 and 192 form a disulfide. Residue G120 coordinates ATP. The segment at 142–144 (KDQ) is interaction with tRNA. The active-site Cysteine persulfide intermediate is C192.

This sequence belongs to the MnmA/TRMU family.

The protein localises to the cytoplasm. The enzyme catalyses S-sulfanyl-L-cysteinyl-[protein] + uridine(34) in tRNA + AH2 + ATP = 2-thiouridine(34) in tRNA + L-cysteinyl-[protein] + A + AMP + diphosphate + H(+). Functionally, catalyzes the 2-thiolation of uridine at the wobble position (U34) of tRNA, leading to the formation of s(2)U34. This Bacteroides thetaiotaomicron (strain ATCC 29148 / DSM 2079 / JCM 5827 / CCUG 10774 / NCTC 10582 / VPI-5482 / E50) protein is tRNA-specific 2-thiouridylase MnmA 1.